A 456-amino-acid chain; its full sequence is Acid sphingomyelinase-like phosphodiesterase 3b (456 aa).

A signal peptide spans 1-18 (MTLLGWLIFLAPWGVAGA). Zn(2+)-binding residues include Asp28 and His30. N-linked (GlcNAc...) asparagine glycosylation occurs at Asn34. Cys45 and Cys64 are joined by a disulfide. The N-linked (GlcNAc...) asparagine glycan is linked to Asn72. Asp93 contributes to the Zn(2+) binding site. A glycan (N-linked (GlcNAc...) asparagine) is linked at Asn100. Zn(2+) is bound at residue Asn134. N-linked (GlcNAc...) asparagine glycosylation is found at Asn164 and Asn223. Positions 236, 277, and 279 each coordinate Zn(2+). 2 cysteine pairs are disulfide-bonded: Cys405-Cys409 and Cys415-Cys428.

It belongs to the acid sphingomyelinase family. As to quaternary structure, interacts with TLR4, TLR7, TLR8 and TLR9. Requires Zn(2+) as cofactor. In terms of processing, N-glycosylated. Macrophages and dendritic cells.

The protein resides in the secreted. The protein localises to the cell membrane. In terms of biological role, lipid-modulating phosphodiesterase. Active on the surface of macrophages and dendritic cells and strongly influences macrophage lipid composition and membrane fluidity. Acts as a negative regulator of Toll-like receptor signaling. Has in vitro phosphodiesterase activity, but the physiological substrate is unknown. Lacks activity with phosphocholine-containing lipids, but can cleave CDP-choline, and can release phosphate from ATP and ADP (in vitro). The protein is Acid sphingomyelinase-like phosphodiesterase 3b (Smpdl3b) of Mus musculus (Mouse).